The sequence spans 316 residues: Protoheme IX farnesyltransferase (316 aa).

9 helical membrane passes run 34–54 (VMSL…GHIN), 55–75 (PFIG…SGAL), 95–115 (IPAG…LSAF), 118–138 (IILG…TIFF), 155–175 (IVIG…CVTG), 182–202 (IVLF…LALF), 228–250 (IVIY…FASL), 254–273 (AFAT…VLRM), and 287–307 (FAFS…DYAI).

Belongs to the UbiA prenyltransferase family. Protoheme IX farnesyltransferase subfamily.

It is found in the cell inner membrane. It carries out the reaction heme b + (2E,6E)-farnesyl diphosphate + H2O = Fe(II)-heme o + diphosphate. Its pathway is porphyrin-containing compound metabolism; heme O biosynthesis; heme O from protoheme: step 1/1. Its function is as follows. Converts heme B (protoheme IX) to heme O by substitution of the vinyl group on carbon 2 of heme B porphyrin ring with a hydroxyethyl farnesyl side group. This Rhizobium meliloti (strain 1021) (Ensifer meliloti) protein is Protoheme IX farnesyltransferase.